The primary structure comprises 438 residues: MFLPQEFIRRKRDGQPLDRDGMAAFVRGVTDGSVTEGQVAAFAMAVYFNDLSTDERVALTLAQRDSGDVLDWRALGLGGPVIDKHSTGGVGDVVSLMLGPMVAACGGYVPMISGRGLGHTGGTLDKLSAIPGYDVMPDTDAFRRTVREVGVAIIGQTARLAPADKRIYAIRDVTATVESVAMITASILSKKLAAGLDGLVMDVKVGSGAFMPTAEKSAELARSIVDVGNGAGMKTTAILTDMNQSLAPCAGNALEVACAIDYLTGKSRPARLHDVTMALSAELLVTGGLARDAAHAREKLQQALDSGAAAERFARMVVALGGPADLLDAPARHLARAAVIVPVPAPASGVVQRVDCRALGLAVVALGGGRTRAEDAIDVSVGLSALAEIGQRIESGEPLGFVHARDEAAAAHAADAIRRGYVLGDTGEAPPTLYRQIG.

The protein belongs to the thymidine/pyrimidine-nucleoside phosphorylase family. In terms of assembly, homodimer.

The catalysed reaction is thymidine + phosphate = 2-deoxy-alpha-D-ribose 1-phosphate + thymine. It participates in pyrimidine metabolism; dTMP biosynthesis via salvage pathway; dTMP from thymine: step 1/2. In terms of biological role, the enzymes which catalyze the reversible phosphorolysis of pyrimidine nucleosides are involved in the degradation of these compounds and in their utilization as carbon and energy sources, or in the rescue of pyrimidine bases for nucleotide synthesis. This is Thymidine phosphorylase from Burkholderia orbicola (strain MC0-3).